The primary structure comprises 165 residues: Neurotrophin-3 (165 aa).

The first 3 residues, 1-3, serve as a signal peptide directing secretion; sequence IQS. Positions 4-119 are excised as a propeptide; the sequence is TSMDQGSLSE…VLTXTSXXXR (116 aa).

The protein belongs to the NGF-beta family.

The protein resides in the secreted. Seems to promote the survival of visceral and proprioceptive sensory neurons. This is Neurotrophin-3 (NTF3) from Tropidophis haetianus (Haitian dwarf boa).